Reading from the N-terminus, the 113-residue chain is DNA-binding protein PTO0204 (113 aa).

The protein belongs to the PDCD5 family.

The chain is DNA-binding protein PTO0204 from Picrophilus torridus (strain ATCC 700027 / DSM 9790 / JCM 10055 / NBRC 100828 / KAW 2/3).